Here is a 443-residue protein sequence, read N- to C-terminus: Diels-Alderase poxQ (443 aa).

Positions 1–23 (MARIPLEFLSITLPVLLLAYCLA) are cleaved as a signal peptide. 3 N-linked (GlcNAc...) asparagine glycosylation sites follow: N78, N97, and N145.

It belongs to the Diels-Alderase family.

It functions in the pathway secondary metabolite biosynthesis. Functionally, diels-Alderase; part of the gene cluster that mediates the biosynthesis of oxaleimides, cytotoxic compounds containing an unusual disubstituted succinimide moiety. The first step of the pathway is provided by the HR-PKS poxF that serves in a new mode of collaborative biosynthesis with the PKS-NRPS poxE, by providing the olefin containing amino acid substrate via the synthesis of an ACP-bound dec-4-enoate. The cytochrome P450 monooxygenase poxM-catalyzed oxidation at the alpha-position creates the enzyme-bound 2-hydroxydec-4-enoyl-ACP thioester, which may be prone to spontaneous hydrolysis to yield 2-hydroxydec-4-enoic acid due to increased electrophilicity of the carbonyl. 2-hydroxydec-4-enoic acid can then be further oxidized by poxM to yield the alpha-ketoacid 2-oxodec-4-enoicacid, which is reductively aminated by the aminotransferase poxL to yield (S,E)-2-aminodec-4-enoic acid. The Hybrid PKS-NRPS synthetase poxE then performs condensation between the octaketide product of its PKS modules and the amino group of (S,E)-2-aminodec-4-enoic acid which is activated and incorporated by the adenylation domain. The resulting aminoacyl product can be cyclized by the Diels-Alderase PoxQ and reductively released by the reductive (R) domain of poxE to yield an aldehyde intermediate. The released aldehyde is then substrate for a Knoevenagel condensation by the hydrolyase poxO followed by an oxidation at the 5-position of the pyrrolidone ring. The presence of the olefin from the amino acid building block allows for migration of the substituted allyl group to occur. This allylic transposition reaction takes place in a conjugate addition, semipinacol-like fashion to yield a succinimide intermediate. Iterative two-electron oxidations of the C7 methyl of the succinimide intermediate to the carboxylic acid can be catalyzed by one of two remaining cytochrome P450 monooxygenasess poxC or poxD to yield oxaleimide A. Subsequent oxidation yields the maleimide scaffold oxaleimide I. Both oxaleimide A and oxaleimide I can undergo oxidative modifications in the decalin ring to yield the series of products oxaleimides B to H. This chain is Diels-Alderase poxQ, found in Penicillium oxalicum (strain 114-2 / CGMCC 5302) (Penicillium decumbens).